The sequence spans 599 residues: Potassium-transporting ATPase potassium-binding subunit (599 aa).

Helical transmembrane passes span 8–28 (LLAL…IWLA), 61–81 (WQYA…VYAL), 133–153 (ALAV…FALF), 176–196 (AWLL…NGVI), 280–300 (LTNF…CFAF), 311–331 (WAVL…ITPA), 366–386 (INAS…AVIA), 391–411 (FTPL…VVFG), 416–436 (GLYG…LMIG), 456–476 (IAIL…VLAG), 521–541 (LLGL…LAIA), and 563–583 (LFVL…YVPA).

This sequence belongs to the KdpA family. In terms of assembly, the system is composed of three essential subunits: KdpA, KdpB and KdpC.

The protein resides in the cell inner membrane. Part of the high-affinity ATP-driven potassium transport (or Kdp) system, which catalyzes the hydrolysis of ATP coupled with the electrogenic transport of potassium into the cytoplasm. This subunit binds the periplasmic potassium ions and delivers the ions to the membrane domain of KdpB through an intramembrane tunnel. The chain is Potassium-transporting ATPase potassium-binding subunit from Polaromonas naphthalenivorans (strain CJ2).